The chain runs to 738 residues: Conserved oligomeric Golgi complex subunit 4 (738 aa).

It belongs to the COG4 family. In terms of assembly, component of the conserved oligomeric Golgi complex which is composed of eight different subunits and is required for normal Golgi morphology and localization. Interacts with COG2 and COG3.

The protein resides in the golgi apparatus membrane. Its function is as follows. Required for normal Golgi function. This is Conserved oligomeric Golgi complex subunit 4 from Arabidopsis thaliana (Mouse-ear cress).